The sequence spans 363 residues: 3-ketodihydrosphingosine reductase TSC10 (363 aa).

Residue Leu10 participates in NADP(+) binding. Gly13, Ser15, and Gly17 together coordinate NADPH. Positions 13–17 (GGSQG) match the GXSXG motif. Position 18 (Leu18) interacts with NADP(+). NADPH-binding residues include Arg40, Lys44, Asp131, and Leu132. Asp131 contacts NADP(+). Catalysis depends on Ser206, which acts as the Proton donor. NADP(+)-binding residues include Tyr220, Lys224, and Ser253. Tyr220 serves as the catalytic Proton acceptor. Lys224 serves as the catalytic Lowers pKa of active site Tyr. The chain crosses the membrane as a helical span at residues 324–344 (FVQWLIGVIANLLVVPFYMVL).

Belongs to the short-chain dehydrogenases/reductases (SDR) family.

It localises to the endoplasmic reticulum membrane. The catalysed reaction is sphinganine + NADP(+) = 3-oxosphinganine + NADPH + H(+). The protein operates within lipid metabolism; sphingolipid metabolism. Its function is as follows. Catalyzes the reduction of 3'-oxosphinganine (3-ketodihydrosphingosine/KDS) to sphinganine (dihydrosphingosine/DHS), the second step of de novo sphingolipid biosynthesis. This is 3-ketodihydrosphingosine reductase TSC10 (TSC10) from Candida glabrata (strain ATCC 2001 / BCRC 20586 / JCM 3761 / NBRC 0622 / NRRL Y-65 / CBS 138) (Yeast).